The following is a 355-amino-acid chain: Uroporphyrinogen decarboxylase (355 aa).

Residues 27-31, Asp-77, Tyr-154, Thr-209, and His-327 contribute to the substrate site; that span reads RQAGR.

Belongs to the uroporphyrinogen decarboxylase family. In terms of assembly, homodimer.

The protein localises to the cytoplasm. The catalysed reaction is uroporphyrinogen III + 4 H(+) = coproporphyrinogen III + 4 CO2. It participates in porphyrin-containing compound metabolism; protoporphyrin-IX biosynthesis; coproporphyrinogen-III from 5-aminolevulinate: step 4/4. Catalyzes the decarboxylation of four acetate groups of uroporphyrinogen-III to yield coproporphyrinogen-III. The polypeptide is Uroporphyrinogen decarboxylase (Tolumonas auensis (strain DSM 9187 / NBRC 110442 / TA 4)).